Reading from the N-terminus, the 284-residue chain is tRNA-splicing endonuclease (284 aa).

Residues tyrosine 222, histidine 229, and lysine 257 contribute to the active site.

It belongs to the tRNA-intron endonuclease family. Archaeal long subfamily. Homodimer.

The enzyme catalyses pretRNA = a 3'-half-tRNA molecule with a 5'-OH end + a 5'-half-tRNA molecule with a 2',3'-cyclic phosphate end + an intron with a 2',3'-cyclic phosphate and a 5'-hydroxyl terminus.. In terms of biological role, endonuclease that removes tRNA introns. Cleaves pre-tRNA at the 5'- and 3'-splice sites to release the intron. The products are an intron and two tRNA half-molecules bearing 2',3' cyclic phosphate and 5'-OH termini. Recognizes a pseudosymmetric substrate in which 2 bulged loops of 3 bases are separated by a stem of 4 bp. The sequence is that of tRNA-splicing endonuclease from Picrophilus torridus (strain ATCC 700027 / DSM 9790 / JCM 10055 / NBRC 100828 / KAW 2/3).